A 203-amino-acid chain; its full sequence is dITP/XTP pyrophosphatase (203 aa).

7–12 (SGNLHK) lines the substrate pocket. Residues Glu47 and Asp77 each coordinate Mg(2+). Catalysis depends on Asp77, which acts as the Proton acceptor. Substrate contacts are provided by residues Ser78, 160–163 (FGYD), Lys183, and 188–189 (HR).

This sequence belongs to the HAM1 NTPase family. As to quaternary structure, homodimer. It depends on Mg(2+) as a cofactor.

The enzyme catalyses XTP + H2O = XMP + diphosphate + H(+). It carries out the reaction dITP + H2O = dIMP + diphosphate + H(+). It catalyses the reaction ITP + H2O = IMP + diphosphate + H(+). Pyrophosphatase that catalyzes the hydrolysis of nucleoside triphosphates to their monophosphate derivatives, with a high preference for the non-canonical purine nucleotides XTP (xanthosine triphosphate), dITP (deoxyinosine triphosphate) and ITP. Seems to function as a house-cleaning enzyme that removes non-canonical purine nucleotides from the nucleotide pool, thus preventing their incorporation into DNA/RNA and avoiding chromosomal lesions. This chain is dITP/XTP pyrophosphatase, found in Opitutus terrae (strain DSM 11246 / JCM 15787 / PB90-1).